The following is an 81-amino-acid chain: Photosystem I iron-sulfur center (81 aa).

4Fe-4S ferredoxin-type domains follow at residues 2–31 (SHAV…MVPW) and 39–68 (IAAS…IRVY). Residues cysteine 11, cysteine 14, cysteine 17, cysteine 21, cysteine 48, cysteine 51, cysteine 54, and cysteine 58 each coordinate [4Fe-4S] cluster.

As to quaternary structure, the cyanobacterial PSI reaction center is composed of one copy each of PsaA,B,C,D,E,F,I,J,K,L,M and X, and forms trimeric complexes. It depends on [4Fe-4S] cluster as a cofactor.

It localises to the cellular thylakoid membrane. It carries out the reaction reduced [plastocyanin] + hnu + oxidized [2Fe-2S]-[ferredoxin] = oxidized [plastocyanin] + reduced [2Fe-2S]-[ferredoxin]. Its function is as follows. Apoprotein for the two 4Fe-4S centers FA and FB of photosystem I (PSI); essential for photochemical activity. FB is the terminal electron acceptor of PSI, donating electrons to ferredoxin. The C-terminus interacts with PsaA/B/D and helps assemble the protein into the PSI complex. Required for binding of PsaD and PsaE to PSI. PSI is a plastocyanin/cytochrome c6-ferredoxin oxidoreductase, converting photonic excitation into a charge separation, which transfers an electron from the donor P700 chlorophyll pair to the spectroscopically characterized acceptors A0, A1, FX, FA and FB in turn. In Prochlorococcus marinus (strain MIT 9303), this protein is Photosystem I iron-sulfur center.